Here is a 129-residue protein sequence, read N- to C-terminus: MARKTNTRKRRVRKNIETGIAHIRSTFNNTIVTITDVHGNTIAWSSAGALGFKGSRKSTPFAAQMAAEAAAKASMEHGMKTVEVNVKGPGAGREAAIRALQAAGLEITAIKDVTPIPHNGCRPPKRRRV.

This sequence belongs to the universal ribosomal protein uS11 family. Part of the 30S ribosomal subunit. Interacts with proteins S7 and S18. Binds to IF-3.

In terms of biological role, located on the platform of the 30S subunit, it bridges several disparate RNA helices of the 16S rRNA. Forms part of the Shine-Dalgarno cleft in the 70S ribosome. The chain is Small ribosomal subunit protein uS11 from Geobacillus sp. (strain WCH70).